A 196-amino-acid polypeptide reads, in one-letter code: Alpha-crystallin A chain (196 aa).

An N-acetylmethionine modification is found at M1. The required for complex formation with BFSP1 and BFSP2 stretch occupies residues 1–63 (MDVTIQHPWF…RTVLDSGISE (63 aa)). Residue Q6 is modified to Deamidated glutamine; partial. A Phosphoserine modification is found at S45. Deamidated glutamine; partial is present on Q50. The region spanning 76 to 185 (HAGNPKNNPG…GHSERAIPVS (110 aa)) is the sHSP domain. Residues K93 and K122 each carry the N6-acetyllysine modification. Residue H123 coordinates Zn(2+). Residue N124 is modified to Deamidated asparagine; partial. E125 and H130 together coordinate Zn(2+). The residue at position 145 (S145) is a Phosphoserine. At N146 the chain carries Deamidated asparagine; partial. A disordered region spans residues 168–196 (KVQSGLDAGHSERAIPVSREEKPSSAPSS). At Q170 the chain carries Deamidated glutamine; partial. Residues 176–190 (GHSERAIPVSREEKP) show a composition bias toward basic and acidic residues. H177 is a binding site for Zn(2+). An O-linked (GlcNAc) serine glycan is attached at S185.

This sequence belongs to the small heat shock protein (HSP20) family. Heteropolymer composed of three CRYAA and one CRYAB subunits. Inter-subunit bridging via zinc ions enhances stability, which is crucial as there is no protein turn over in the lens. Can also form homodimers and homotetramers (dimers of dimers) which serve as the building blocks of homooligomers. Within homooligomers, the zinc-binding motif is created from residues of 3 different molecules. His-123 and Glu-125 from one molecule are ligands of the zinc ion, and His-130 and His-177 residues from additional molecules complete the site with tetrahedral coordination geometry. Part of a complex required for lens intermediate filament formation composed of BFSP1, BFSP2 and CRYAA. In terms of processing, acetylation at Lys-93 may increase chaperone activity. Post-translationally, undergoes age-dependent proteolytical cleavage at the C-terminus. Cleavage by m-calpain produces specifically alpha-crystallin A(1-162), cleavage by Capn3/Lp82 produces specifically alpha-crystallin A(1-168) which is the major truncated form during normal maturation and induced cataract formation. Highly expressed in eye lens. Also expressed in non-lenticular tissues such as brain, spleen, liver, lung, skin, small intestine and a several epithelial and fibroblast cell lines with highest levels in spleen.

The protein resides in the cytoplasm. The protein localises to the nucleus. Its function is as follows. Contributes to the transparency and refractive index of the lens. Acts as a chaperone, preventing aggregation of various proteins under a wide range of stress conditions. Required for the correct formation of lens intermediate filaments as part of a complex composed of BFSP1, BFSP2 and CRYAA. Inhibits bacterial growth in the lens. In Rattus norvegicus (Rat), this protein is Alpha-crystallin A chain (Cryaa).